Here is a 369-residue protein sequence, read N- to C-terminus: Anhydro-N-acetylmuramic acid kinase (369 aa).

12–19 (GTSMDGVD) provides a ligand contact to ATP.

This sequence belongs to the anhydro-N-acetylmuramic acid kinase family.

The catalysed reaction is 1,6-anhydro-N-acetyl-beta-muramate + ATP + H2O = N-acetyl-D-muramate 6-phosphate + ADP + H(+). The protein operates within amino-sugar metabolism; 1,6-anhydro-N-acetylmuramate degradation. It functions in the pathway cell wall biogenesis; peptidoglycan recycling. Functionally, catalyzes the specific phosphorylation of 1,6-anhydro-N-acetylmuramic acid (anhMurNAc) with the simultaneous cleavage of the 1,6-anhydro ring, generating MurNAc-6-P. Is required for the utilization of anhMurNAc either imported from the medium or derived from its own cell wall murein, and thus plays a role in cell wall recycling. This chain is Anhydro-N-acetylmuramic acid kinase, found in Shewanella sp. (strain ANA-3).